Here is a 315-residue protein sequence, read N- to C-terminus: Glutathione synthetase (315 aa).

The region spanning 125 to 310 (KLFTAWFSDL…ITGMLMDAIE (186 aa)) is the ATP-grasp domain. 151 to 207 (WEKHSDIILKPLDGMGGASIFRVKEGDPNLGVIAETLTEHGTRYCMAQNYLPAIKDG) is a binding site for ATP. Mg(2+) is bound by residues Glu281 and Asn283.

The protein belongs to the prokaryotic GSH synthase family. Requires Mg(2+) as cofactor. The cofactor is Mn(2+).

It catalyses the reaction gamma-L-glutamyl-L-cysteine + glycine + ATP = glutathione + ADP + phosphate + H(+). Its pathway is sulfur metabolism; glutathione biosynthesis; glutathione from L-cysteine and L-glutamate: step 2/2. This Escherichia coli O157:H7 protein is Glutathione synthetase.